The following is a 248-amino-acid chain: Phosphoadenosine 5'-phosphosulfate reductase (248 aa).

The active-site Nucleophile; cysteine thiosulfonate intermediate is the Cys-239.

It belongs to the PAPS reductase family. CysH subfamily.

It localises to the cytoplasm. It catalyses the reaction [thioredoxin]-disulfide + sulfite + adenosine 3',5'-bisphosphate + 2 H(+) = [thioredoxin]-dithiol + 3'-phosphoadenylyl sulfate. The protein operates within sulfur metabolism; hydrogen sulfide biosynthesis; sulfite from sulfate: step 3/3. Catalyzes the formation of sulfite from phosphoadenosine 5'-phosphosulfate (PAPS) using thioredoxin as an electron donor. In Alteromonas mediterranea (strain DSM 17117 / CIP 110805 / LMG 28347 / Deep ecotype), this protein is Phosphoadenosine 5'-phosphosulfate reductase.